We begin with the raw amino-acid sequence, 178 residues long: Adenine phosphoribosyltransferase (178 aa).

It belongs to the purine/pyrimidine phosphoribosyltransferase family. As to quaternary structure, homodimer.

It localises to the cytoplasm. The catalysed reaction is AMP + diphosphate = 5-phospho-alpha-D-ribose 1-diphosphate + adenine. It functions in the pathway purine metabolism; AMP biosynthesis via salvage pathway; AMP from adenine: step 1/1. Catalyzes a salvage reaction resulting in the formation of AMP, that is energically less costly than de novo synthesis. This chain is Adenine phosphoribosyltransferase, found in Bacteroides fragilis (strain YCH46).